We begin with the raw amino-acid sequence, 892 residues long: Transmembrane channel-like protein 2-B (892 aa).

The segment at 29–125 is disordered; the sequence is GINQNLRREE…DESMSEGEMA (97 aa). Composition is skewed to basic residues over residues 48–58 and 66–77; these read RRAKKRRMNRR and RSKKMRMRVRKN. Residues 103 to 112 show a composition bias toward low complexity; the sequence is PSSCSSSSDN. 9 helical membrane-spanning segments follow: residues 235–255, 275–295, 308–328, 403–423, 444–464, 482–502, 616–636, 671–691, and 736–756; these read LVLF…MGIP, FSVL…YGFY, LPLS…MVVI, LANV…YAVV, EVEI…EAIA, IFAL…DEVN, LIFN…LVGI, FYMG…IYSI, and GLII…LNAV. Residues 772–785 are compositionally biased toward basic and acidic residues; it reads QMQRDEEKNRRNNK. 2 disordered regions span residues 772 to 791 and 796 to 892; these read QMQR…TNQV and EDLL…PPRR. Over residues 862 to 878 the composition is skewed to pro residues; that stretch reads PRQPGPLPGNPRGPPPG.

This sequence belongs to the TMC family. In terms of tissue distribution, in adults, expression is restricted to the hair cells of inner ear and lateral line organ. Expressed at higher levels in the larval lateral-line neuromasts than in the larval inner ear.

It is found in the membrane. In terms of biological role, probable component of the mechanotransducer (MET) non-selective cation channel. This is Transmembrane channel-like protein 2-B from Danio rerio (Zebrafish).